The sequence spans 105 residues: Small ribosomal subunit protein uS10 (105 aa).

The protein belongs to the universal ribosomal protein uS10 family. In terms of assembly, part of the 30S ribosomal subunit.

Functionally, involved in the binding of tRNA to the ribosomes. The protein is Small ribosomal subunit protein uS10 of Chlamydia muridarum (strain MoPn / Nigg).